The primary structure comprises 316 residues: M-phase inducer phosphatase cdc-25.3 (316 aa).

Residues 35–65 (QNRQHSSAISHISNSSPPTRKRSIDGGYTSG) form a disordered region. The segment covering 39 to 50 (HSSAISHISNSS) has biased composition (low complexity). A Rhodanese domain is found at 136 to 242 (FMQKYILIDC…FYAFTRGLEK (107 aa)).

This sequence belongs to the MPI phosphatase family.

It carries out the reaction O-phospho-L-tyrosyl-[protein] + H2O = L-tyrosyl-[protein] + phosphate. This chain is M-phase inducer phosphatase cdc-25.3 (cdc-25.3), found in Caenorhabditis elegans.